The chain runs to 478 residues: Probable serine carboxypeptidase CPVL (478 aa).

A signal peptide spans 1 to 22 (MVRAQWKVIILLILLMVIPSDG). Residues Asn-83 and Asn-134 are each glycosylated (N-linked (GlcNAc...) asparagine). Ser-206 is a catalytic residue. Asn-309 and Asn-350 each carry an N-linked (GlcNAc...) asparagine glycan. Residues Asp-390 and His-450 contribute to the active site.

Belongs to the peptidase S10 family.

May be involved in the digestion of phagocytosed particles in the lysosome, participation in an inflammatory protease cascade, and trimming of peptides for antigen presentation. The polypeptide is Probable serine carboxypeptidase CPVL (CPVL) (Rattus norvegicus (Rat)).